Reading from the N-terminus, the 440-residue chain is Chromosomal replication initiator protein DnaA (440 aa).

The segment at 1–69 (MKERILQEIK…VKVVLGNDAT (69 aa)) is domain I, interacts with DnaA modulators. A domain II region spans residues 69-96 (TFEITYEAFEPHSSYSEPLVKKRAVLLT). Residues 97–313 (PLNPDYTFEN…GAIIKLLVYK (217 aa)) are domain III, AAA+ region. Positions 140, 142, 143, and 144 each coordinate ATP. A domain IV, binds dsDNA region spans residues 314 to 440 (ETTGKEVDLR…GEISKRALSG (127 aa)).

Belongs to the DnaA family. As to quaternary structure, oligomerizes as a right-handed, spiral filament on DNA at oriC.

Its subcellular location is the cytoplasm. Functionally, plays an essential role in the initiation and regulation of chromosomal replication. ATP-DnaA binds to the origin of replication (oriC) to initiate formation of the DNA replication initiation complex once per cell cycle. Binds the DnaA box (a 9 base pair repeat at the origin) and separates the double-stranded (ds)DNA. Forms a right-handed helical filament on oriC DNA; dsDNA binds to the exterior of the filament while single-stranded (ss)DNA is stabiized in the filament's interior. The ATP-DnaA-oriC complex binds and stabilizes one strand of the AT-rich DNA unwinding element (DUE), permitting loading of DNA polymerase. After initiation quickly degrades to an ADP-DnaA complex that is not apt for DNA replication. Binds acidic phospholipids. In Thermotoga petrophila (strain ATCC BAA-488 / DSM 13995 / JCM 10881 / RKU-1), this protein is Chromosomal replication initiator protein DnaA.